The following is a 223-amino-acid chain: Ribonuclease 3 (223 aa).

The 123-residue stretch at 5 to 127 folds into the RNase III domain; the sequence is LQRLEKKIGY…IIGAIYLDSD (123 aa). Glu-40 contacts Mg(2+). The active site involves Asp-44. The Mg(2+) site is built by Asp-113 and Glu-116. Glu-116 is a catalytic residue. Residues 154 to 223 form the DRBM domain; the sequence is DPKTRLQEYL…AADIALGQLN (70 aa).

The protein belongs to the ribonuclease III family. In terms of assembly, homodimer. Mg(2+) is required as a cofactor.

Its subcellular location is the cytoplasm. It catalyses the reaction Endonucleolytic cleavage to 5'-phosphomonoester.. Digests double-stranded RNA. Involved in the processing of primary rRNA transcript to yield the immediate precursors to the large and small rRNAs (23S and 16S). Processes some mRNAs, and tRNAs when they are encoded in the rRNA operon. Processes pre-crRNA and tracrRNA of type II CRISPR loci if present in the organism. The protein is Ribonuclease 3 of Aliivibrio fischeri (strain ATCC 700601 / ES114) (Vibrio fischeri).